Consider the following 275-residue polypeptide: Glutamate racemase (275 aa).

Substrate-binding positions include 22–23 (DS) and 54–55 (YG). Cys-85 functions as the Proton donor/acceptor in the catalytic mechanism. Residue 86–87 (NT) participates in substrate binding. Residue Cys-196 is the Proton donor/acceptor of the active site. Position 197-198 (197-198 (TH)) interacts with substrate.

It belongs to the aspartate/glutamate racemases family.

It catalyses the reaction L-glutamate = D-glutamate. It functions in the pathway cell wall biogenesis; peptidoglycan biosynthesis. Its function is as follows. Provides the (R)-glutamate required for cell wall biosynthesis. The chain is Glutamate racemase from Pseudomonas syringae pv. tomato (strain ATCC BAA-871 / DC3000).